A 103-amino-acid polypeptide reads, in one-letter code: Small ribosomal subunit protein uS10 (103 aa).

Belongs to the universal ribosomal protein uS10 family. Part of the 30S ribosomal subunit.

Its function is as follows. Involved in the binding of tRNA to the ribosomes. The protein is Small ribosomal subunit protein uS10 of Blochmanniella pennsylvanica (strain BPEN).